The sequence spans 673 residues: Beta-galactosidase 8 (673 aa).

The first 20 residues, 1–20 (MGPSRSFQNLLLLLLPLALA), serve as a signal peptide directing secretion. A glycan (N-linked (GlcNAc...) asparagine) is linked at N38. Residue E189 is the Proton donor of the active site. An N-linked (GlcNAc...) asparagine glycan is attached at N230. The active-site Nucleophile is the E272. 5 N-linked (GlcNAc...) asparagine glycosylation sites follow: N304, N329, N401, N489, and N540.

Belongs to the glycosyl hydrolase 35 family.

It is found in the secreted. The protein localises to the extracellular space. The protein resides in the apoplast. It carries out the reaction Hydrolysis of terminal non-reducing beta-D-galactose residues in beta-D-galactosides.. This is Beta-galactosidase 8 from Oryza sativa subsp. japonica (Rice).